Consider the following 142-residue polypeptide: MFAVIKTGGKQYRVAANDLIKVEKVAGEAGDIVEFAEVLMVGSTIGAPTVAGSLVTAEVVEQGRGRKVIAFKKRRRQNSKRTRGHRQELTTIRISEILTDGAKPSKKAAEKKAPKADAAEGEAAKPKKAAPKKAATKAESAE.

A compositionally biased stretch (basic residues) spans R74 to G84. The segment at R74–E142 is disordered. Residues K107 to K125 are compositionally biased toward basic and acidic residues. Positions P126–A135 are enriched in basic residues.

This sequence belongs to the bacterial ribosomal protein bL21 family. As to quaternary structure, part of the 50S ribosomal subunit. Contacts protein L20.

This protein binds to 23S rRNA in the presence of protein L20. The sequence is that of Large ribosomal subunit protein bL21 from Brucella abortus (strain S19).